Consider the following 154-residue polypeptide: MKIYEGKLLAQGLRFGIVVSRFNDFIGERLLGGALDALKRSGAEEKNIDVFKVPGAFEIPLVAKKAASTGRYDAVICLGAVIRGATPHFDYVANEVSKGIAHAGLEAGVPISFGVLTTDTIEQAIERAGSKSGNKGWDAAVAAIEMANLIKQMS.

5-amino-6-(D-ribitylamino)uracil is bound by residues Phe-22, 56-58 (AFE), and 80-82 (AVI). Residue 85-86 (AT) participates in (2S)-2-hydroxy-3-oxobutyl phosphate binding. The Proton donor role is filled by His-88. Phe-113 is a binding site for 5-amino-6-(D-ribitylamino)uracil. Residue Arg-127 participates in (2S)-2-hydroxy-3-oxobutyl phosphate binding.

It belongs to the DMRL synthase family.

It catalyses the reaction (2S)-2-hydroxy-3-oxobutyl phosphate + 5-amino-6-(D-ribitylamino)uracil = 6,7-dimethyl-8-(1-D-ribityl)lumazine + phosphate + 2 H2O + H(+). It participates in cofactor biosynthesis; riboflavin biosynthesis; riboflavin from 2-hydroxy-3-oxobutyl phosphate and 5-amino-6-(D-ribitylamino)uracil: step 1/2. Its function is as follows. Catalyzes the formation of 6,7-dimethyl-8-ribityllumazine by condensation of 5-amino-6-(D-ribitylamino)uracil with 3,4-dihydroxy-2-butanone 4-phosphate. This is the penultimate step in the biosynthesis of riboflavin. The polypeptide is 6,7-dimethyl-8-ribityllumazine synthase (Syntrophobacter fumaroxidans (strain DSM 10017 / MPOB)).